The primary structure comprises 260 residues: tRNA pseudouridine synthase A (260 aa).

Aspartate 52 (nucleophile) is an active-site residue. A substrate-binding site is contributed by tyrosine 110.

This sequence belongs to the tRNA pseudouridine synthase TruA family. In terms of assembly, homodimer.

The catalysed reaction is uridine(38/39/40) in tRNA = pseudouridine(38/39/40) in tRNA. Formation of pseudouridine at positions 38, 39 and 40 in the anticodon stem and loop of transfer RNAs. This is tRNA pseudouridine synthase A from Thiobacillus denitrificans (strain ATCC 25259 / T1).